A 328-amino-acid polypeptide reads, in one-letter code: Peroxidase 59 (328 aa).

Residues 1 to 28 (MKTQTKVMGGHVLLTVFTLCMLCSGVRA) form the signal peptide. Residue Gln29 is modified to Pyrrolidone carboxylic acid. Disulfide bonds link Cys39-Cys116, Cys72-Cys77, Cys122-Cys323, and Cys200-Cys232. The Proton acceptor role is filled by His70. Positions 71, 74, 76, 78, and 80 each coordinate Ca(2+). Pro163 contributes to the substrate binding site. Asn182 carries N-linked (GlcNAc...) asparagine glycosylation. Residue His193 participates in heme b binding. A Ca(2+)-binding site is contributed by Thr194. N-linked (GlcNAc...) asparagine glycosylation is found at Asn209 and Asn239. The Ca(2+) site is built by Asp245, Thr248, Thr251, and Asp253. N-linked (GlcNAc...) asparagine glycans are attached at residues Asn281 and Asn310.

It belongs to the peroxidase family. Classical plant (class III) peroxidase subfamily. It depends on heme b as a cofactor. Ca(2+) serves as cofactor. Slightly expressed in roots.

The protein resides in the secreted. It carries out the reaction 2 a phenolic donor + H2O2 = 2 a phenolic radical donor + 2 H2O. Its function is as follows. Removal of H(2)O(2), oxidation of toxic reductants, biosynthesis and degradation of lignin, suberization, auxin catabolism, response to environmental stresses such as wounding, pathogen attack and oxidative stress. These functions might be dependent on each isozyme/isoform in each plant tissue. The chain is Peroxidase 59 (PER59) from Arabidopsis thaliana (Mouse-ear cress).